A 424-amino-acid polypeptide reads, in one-letter code: Glucose-1-phosphate adenylyltransferase (424 aa).

Residues Y112, G177, 192–193, and S210 contribute to the alpha-D-glucose 1-phosphate site; that span reads EK.

The protein belongs to the bacterial/plant glucose-1-phosphate adenylyltransferase family. As to quaternary structure, homotetramer.

It carries out the reaction alpha-D-glucose 1-phosphate + ATP + H(+) = ADP-alpha-D-glucose + diphosphate. It participates in glycan biosynthesis; glycogen biosynthesis. Its function is as follows. Involved in the biosynthesis of ADP-glucose, a building block required for the elongation reactions to produce glycogen. Catalyzes the reaction between ATP and alpha-D-glucose 1-phosphate (G1P) to produce pyrophosphate and ADP-Glc. This is Glucose-1-phosphate adenylyltransferase from Methylococcus capsulatus (strain ATCC 33009 / NCIMB 11132 / Bath).